A 292-amino-acid polypeptide reads, in one-letter code: Acetyl-coenzyme A carboxylase carboxyl transferase subunit beta (292 aa).

Residues 29 to 292 (LWVKCSECGQ…HGVKDLMGAN (264 aa)) enclose the CoA carboxyltransferase N-terminal domain. The Zn(2+) site is built by Cys-33, Cys-36, Cys-52, and Cys-55. The segment at 33-55 (CSECGQVAYRKDLISNFNVCSNC) adopts a C4-type zinc-finger fold.

It belongs to the AccD/PCCB family. Acetyl-CoA carboxylase is a heterohexamer composed of biotin carboxyl carrier protein (AccB), biotin carboxylase (AccC) and two subunits each of ACCase subunit alpha (AccA) and ACCase subunit beta (AccD). It depends on Zn(2+) as a cofactor.

The protein localises to the cytoplasm. It carries out the reaction N(6)-carboxybiotinyl-L-lysyl-[protein] + acetyl-CoA = N(6)-biotinyl-L-lysyl-[protein] + malonyl-CoA. It participates in lipid metabolism; malonyl-CoA biosynthesis; malonyl-CoA from acetyl-CoA: step 1/1. Functionally, component of the acetyl coenzyme A carboxylase (ACC) complex. Biotin carboxylase (BC) catalyzes the carboxylation of biotin on its carrier protein (BCCP) and then the CO(2) group is transferred by the transcarboxylase to acetyl-CoA to form malonyl-CoA. This Prochlorococcus marinus (strain MIT 9515) protein is Acetyl-coenzyme A carboxylase carboxyl transferase subunit beta.